Consider the following 600-residue polypeptide: Proline--tRNA ligase (600 aa).

The protein belongs to the class-II aminoacyl-tRNA synthetase family. ProS type 1 subfamily. Homodimer.

It is found in the cytoplasm. The catalysed reaction is tRNA(Pro) + L-proline + ATP = L-prolyl-tRNA(Pro) + AMP + diphosphate. Functionally, catalyzes the attachment of proline to tRNA(Pro) in a two-step reaction: proline is first activated by ATP to form Pro-AMP and then transferred to the acceptor end of tRNA(Pro). As ProRS can inadvertently accommodate and process non-cognate amino acids such as alanine and cysteine, to avoid such errors it has two additional distinct editing activities against alanine. One activity is designated as 'pretransfer' editing and involves the tRNA(Pro)-independent hydrolysis of activated Ala-AMP. The other activity is designated 'posttransfer' editing and involves deacylation of mischarged Ala-tRNA(Pro). The misacylated Cys-tRNA(Pro) is not edited by ProRS. The protein is Proline--tRNA ligase of Synechococcus sp. (strain ATCC 27144 / PCC 6301 / SAUG 1402/1) (Anacystis nidulans).